Consider the following 80-residue polypeptide: Conotoxin SmIVA (80 aa).

The signal sequence occupies residues 1–21; sequence MGMRMMFTVFLLVVLATTVVS. Residues 22 to 38 constitute a propeptide that is removed on maturation; sequence IPSDRASDGRNAAVNER. Glutamine 39 is subject to Pyrrolidone carboxylic acid. Serine 45 is a glycosylation site (O-linked (HexNAc...) serine). 4 positions are modified to 4-hydroxyproline: proline 55, proline 60, proline 70, and proline 72. At serine 75 the chain carries Serine amide. The propeptide occupies 76–80; that stretch reads GRRND.

The protein belongs to the conotoxin A superfamily. In terms of processing, contains 3 disulfide bonds. Expressed by the venom duct.

The protein localises to the secreted. In terms of biological role, neurotoxin with probable activity on sodium channel. Induces intense repetitive firing of the frog neuromuscular junction, leading to a tetanic contracture in muscle fiber (spastic paralysis). In vivo, shows the same effect as the whole venom when injected on fish prey. The protein is Conotoxin SmIVA of Conus stercusmuscarum (Fly-specked cone).